The following is a 95-amino-acid chain: MRKYEIMYIIRPDIEEEAQTALIERFNTILTDNGAEIDKVDEKGKRRLAYEINDYRDGYYVIINFRGSEEAINEFDRLAKFNDDIIRHMAIKDEQ.

It belongs to the bacterial ribosomal protein bS6 family.

In terms of biological role, binds together with bS18 to 16S ribosomal RNA. In Oceanobacillus iheyensis (strain DSM 14371 / CIP 107618 / JCM 11309 / KCTC 3954 / HTE831), this protein is Small ribosomal subunit protein bS6.